The following is a 262-amino-acid chain: Pyridoxine 5'-phosphate synthase (262 aa).

Asn6 is a binding site for 3-amino-2-oxopropyl phosphate. 8–9 (DH) serves as a coordination point for 1-deoxy-D-xylulose 5-phosphate. A 3-amino-2-oxopropyl phosphate-binding site is contributed by Arg17. The active-site Proton acceptor is His43. Residues Arg45 and His50 each coordinate 1-deoxy-D-xylulose 5-phosphate. The Proton acceptor role is filled by Glu70. Thr102 is a binding site for 1-deoxy-D-xylulose 5-phosphate. The active-site Proton donor is His215. 3-amino-2-oxopropyl phosphate-binding positions include Gly216 and 237-238 (GH).

This sequence belongs to the PNP synthase family. In terms of assembly, homooctamer; tetramer of dimers.

Its subcellular location is the cytoplasm. The enzyme catalyses 3-amino-2-oxopropyl phosphate + 1-deoxy-D-xylulose 5-phosphate = pyridoxine 5'-phosphate + phosphate + 2 H2O + H(+). It participates in cofactor biosynthesis; pyridoxine 5'-phosphate biosynthesis; pyridoxine 5'-phosphate from D-erythrose 4-phosphate: step 5/5. Functionally, catalyzes the complicated ring closure reaction between the two acyclic compounds 1-deoxy-D-xylulose-5-phosphate (DXP) and 3-amino-2-oxopropyl phosphate (1-amino-acetone-3-phosphate or AAP) to form pyridoxine 5'-phosphate (PNP) and inorganic phosphate. The chain is Pyridoxine 5'-phosphate synthase from Helicobacter pylori (strain HPAG1).